Consider the following 246-residue polypeptide: tRNA (guanine-N(1)-)-methyltransferase (246 aa).

Residues Gly-113 and Leu-132–Val-137 each bind S-adenosyl-L-methionine.

Belongs to the RNA methyltransferase TrmD family. As to quaternary structure, homodimer.

It localises to the cytoplasm. It catalyses the reaction guanosine(37) in tRNA + S-adenosyl-L-methionine = N(1)-methylguanosine(37) in tRNA + S-adenosyl-L-homocysteine + H(+). In terms of biological role, specifically methylates guanosine-37 in various tRNAs. This is tRNA (guanine-N(1)-)-methyltransferase from Latilactobacillus sakei subsp. sakei (strain 23K) (Lactobacillus sakei subsp. sakei).